The following is a 251-amino-acid chain: 5-oxoprolinase subunit A (251 aa).

Belongs to the LamB/PxpA family. As to quaternary structure, forms a complex composed of PxpA, PxpB and PxpC.

The enzyme catalyses 5-oxo-L-proline + ATP + 2 H2O = L-glutamate + ADP + phosphate + H(+). In terms of biological role, catalyzes the cleavage of 5-oxoproline to form L-glutamate coupled to the hydrolysis of ATP to ADP and inorganic phosphate. In Vibrio parahaemolyticus serotype O3:K6 (strain RIMD 2210633), this protein is 5-oxoprolinase subunit A.